A 311-amino-acid polypeptide reads, in one-letter code: Glycosyltransferase 6 domain-containing protein 1 (311 aa).

Over methionine 1–arginine 5 the chain is Cytoplasmic. A helical; Signal-anchor for type II membrane protein transmembrane segment spans residues arginine 6–phenylalanine 26. The Lumenal segment spans residues arginine 27–leucine 311. N-linked (GlcNAc...) asparagine glycosylation occurs at asparagine 77. Substrate-binding positions include phenylalanine 85–leucine 90, asparagine 176–asparagine 178, and histidine 198–tryptophan 201. Catalysis depends on glutamate 266, which acts as the Nucleophile.

It belongs to the glycosyltransferase 6 family. Mn(2+) serves as cofactor.

Its subcellular location is the membrane. The polypeptide is Glycosyltransferase 6 domain-containing protein 1 (Glt6d1) (Mus musculus (Mouse)).